We begin with the raw amino-acid sequence, 462 residues long: Transactivator/viroplasmin protein (462 aa).

Residues Asn433–Ser462 form a disordered region. The span at Lys443–Ser462 shows a compositional bias: polar residues.

It belongs to the caulimoviridae viroplasmin family.

Its subcellular location is the host cytoplasm. In terms of biological role, enhances the translation of downstream ORFs on polycistronic mRNAs derived from soybean chlorotic mottle virus. This Soybean chlorotic mottle virus protein is Transactivator/viroplasmin protein.